Reading from the N-terminus, the 296-residue chain is Probable endonuclease 4 (296 aa).

Zn(2+) is bound by residues histidine 68, histidine 109, glutamate 144, aspartate 178, histidine 181, histidine 213, aspartate 226, histidine 228, and glutamate 258.

This sequence belongs to the AP endonuclease 2 family. The cofactor is Zn(2+).

The catalysed reaction is Endonucleolytic cleavage to 5'-phosphooligonucleotide end-products.. In terms of biological role, endonuclease IV plays a role in DNA repair. It cleaves phosphodiester bonds at apurinic or apyrimidinic (AP) sites, generating a 3'-hydroxyl group and a 5'-terminal sugar phosphate. The chain is Probable endonuclease 4 from Staphylococcus aureus (strain Mu3 / ATCC 700698).